The primary structure comprises 88 residues: uncharacterized protein (88 aa).

This is an uncharacterized protein from Vaccinia virus (strain Copenhagen) (VACV).